Consider the following 56-residue polypeptide: Small ribosomal subunit protein uS14 (56 aa).

4 residues coordinate Zn(2+): Cys-21, Cys-24, Cys-39, and Cys-42.

Belongs to the universal ribosomal protein uS14 family. Zinc-binding uS14 subfamily. In terms of assembly, part of the 30S ribosomal subunit. The cofactor is Zn(2+).

In terms of biological role, binds 16S rRNA, required for the assembly of 30S particles. In Pyrococcus abyssi (strain GE5 / Orsay), this protein is Small ribosomal subunit protein uS14.